We begin with the raw amino-acid sequence, 411 residues long: Phosphoglycerate kinase (411 aa).

Substrate is bound by residues 22 to 24 (DFN), Arg37, 60 to 63 (HLSR), Arg123, and Arg165. ATP-binding positions include Lys216, Glu339, and 366–369 (GGDS).

This sequence belongs to the phosphoglycerate kinase family. Monomer.

It is found in the cytoplasm. The enzyme catalyses (2R)-3-phosphoglycerate + ATP = (2R)-3-phospho-glyceroyl phosphate + ADP. It participates in carbohydrate degradation; glycolysis; pyruvate from D-glyceraldehyde 3-phosphate: step 2/5. The chain is Phosphoglycerate kinase (pgk) from Mycoplasma genitalium (strain ATCC 33530 / DSM 19775 / NCTC 10195 / G37) (Mycoplasmoides genitalium).